Reading from the N-terminus, the 398-residue chain is uncharacterized protein (398 aa).

The N-terminal stretch at 1 to 21 (MRKVGITLSVVALVIMGFVAG) is a signal peptide. Cys22 carries the post-translational modification N-acetylcysteine. Residue Cys22 is the site of S-archaeol cysteine attachment.

Belongs to the BMP lipoprotein family.

Its subcellular location is the cell membrane. This is an uncharacterized protein from Pyrococcus furiosus (strain ATCC 43587 / DSM 3638 / JCM 8422 / Vc1).